Reading from the N-terminus, the 138-residue chain is Acidic phospholipase A2 Cvv-E6h (138 aa).

Positions 1–16 (MRTLWIVAVLLLGVEG) are cleaved as a signal peptide. Disulfide bonds link cysteine 42/cysteine 131, cysteine 44/cysteine 60, cysteine 59/cysteine 111, cysteine 65/cysteine 138, cysteine 66/cysteine 104, cysteine 73/cysteine 97, and cysteine 91/cysteine 102. Residues tyrosine 43, glycine 45, and glycine 47 each contribute to the Ca(2+) site. Histidine 63 is a catalytic residue. Aspartate 64 is a Ca(2+) binding site. The active site involves aspartate 105.

The protein belongs to the phospholipase A2 family. Group II subfamily. D49 sub-subfamily. Requires Ca(2+) as cofactor. As to expression, expressed by the venom gland.

It localises to the secreted. It catalyses the reaction a 1,2-diacyl-sn-glycero-3-phosphocholine + H2O = a 1-acyl-sn-glycero-3-phosphocholine + a fatty acid + H(+). Functionally, snake venom phospholipase A2 (PLA2) that shows very low inhibition of ADP-induced platelet aggregation in platelet-rich plasma of human, rabbit and guinea pig. In vivo, shows efficient edema-inducing activities in rat paws. PLA2 catalyzes the calcium-dependent hydrolysis of the 2-acyl groups in 3-sn-phosphoglycerides. The chain is Acidic phospholipase A2 Cvv-E6h from Crotalus viridis viridis (Prairie rattlesnake).